A 482-amino-acid chain; its full sequence is Retinoic acid receptor beta (482 aa).

The interval 1–114 is modulating; it reads MSTSSHACPV…PLPPPRVYKP (114 aa). Ser104 bears the Phosphoserine mark. 2 consecutive NR C4-type zinc fingers follow at residues 115 to 135 and 151 to 175; these read CFVC…CEGC and CHRD…LQKC. The segment at residues 115–180 is a DNA-binding region (nuclear receptor); the sequence is CFVCQDKSSG…RLQKCFEVGM (66 aa). The tract at residues 181-209 is hinge; the sequence is SKESVRNDRNKKKKEPSKQECTESYEMTA. The 235-residue stretch at 210-444 folds into the NR LBD domain; that stretch reads ELDDLTEKIR…PLIQEMLENS (235 aa). The interval 443 to 482 is disordered; that stretch reads NSEGHEPLTPSSSGNIAEHSPSVSPSSVENSGVSQSPLLQ. The segment covering 462 to 482 has biased composition (low complexity); sequence SPSVSPSSVENSGVSQSPLLQ.

Belongs to the nuclear hormone receptor family. NR1 subfamily. As to quaternary structure, homodimer. Heterodimer; with a RXR molecule. Binds DNA preferentially as a RAR/RXR heterodimer. Heterodimerizes (via NR LBD) with RXRA. Interacts weakly with NCOR2.

Its subcellular location is the nucleus. The protein localises to the cytoplasm. In terms of biological role, receptor for retinoic acid. Retinoic acid receptors bind as heterodimers to their target response elements in response to their ligands, all-trans or 9-cis retinoic acid, and regulate gene expression in various biological processes. The RAR/RXR heterodimers bind to the retinoic acid response elements (RARE) composed of tandem 5'-AGGTCA-3' sites known as DR1-DR5. In the absence of ligand, acts mainly as an activator of gene expression due to weak binding to corepressors. The RXRA/RARB heterodimer can act as a repressor on the DR1 element and as an activator on the DR5 element. In concert with RARG, required for skeletal growth, matrix homeostasis and growth plate function. The sequence is that of Retinoic acid receptor beta (Rarb) from Mus musculus (Mouse).